The following is a 247-amino-acid chain: MPNTPDRKYKRILLKLSGEQLMGDEGFGIDPKVLDKMALEIGQLVGIGVQVGLVIGGGNLFRGAALSRAGLDRVTGDHMGMLATVMNALAMRDALERSNISSTVMSAIPMHGVTDQYDRRKALRLLDNGEVVIFSAGTGNPFFTTDSAACLRGIEVNAELVLKATKVDGVYSADPMKDPTAVRYSKLTYEKVLTEQLGVMDLTAICLCQDHNMPVRVFQMDKQGALLNIVVGGDEGTLIQGKETEEA.

Residue 15–18 (KLSG) coordinates ATP. The interval 23-28 (GDEGFG) is involved in allosteric activation by GTP. Glycine 57 contacts UMP. ATP contacts are provided by glycine 58 and arginine 62. Residues aspartate 77 and 138–145 (TGNPFFTT) contribute to the UMP site. ATP is bound by residues threonine 165, tyrosine 171, and aspartate 174.

Belongs to the UMP kinase family. Homohexamer.

The protein resides in the cytoplasm. It catalyses the reaction UMP + ATP = UDP + ADP. Its pathway is pyrimidine metabolism; CTP biosynthesis via de novo pathway; UDP from UMP (UMPK route): step 1/1. Its activity is regulated as follows. Allosterically activated by GTP. Inhibited by UTP. Functionally, catalyzes the reversible phosphorylation of UMP to UDP. In Saccharophagus degradans (strain 2-40 / ATCC 43961 / DSM 17024), this protein is Uridylate kinase.